The following is a 303-amino-acid chain: N-acetyl-D-glucosamine kinase (303 aa).

Residues 4–11 and 133–140 contribute to the ATP site; these read GFDMGGTK and GVGGGLIV. Zn(2+) contacts are provided by His157, Cys177, Cys179, and Cys184.

It belongs to the ROK (NagC/XylR) family. NagK subfamily.

The enzyme catalyses N-acetyl-D-glucosamine + ATP = N-acetyl-D-glucosamine 6-phosphate + ADP + H(+). Its pathway is cell wall biogenesis; peptidoglycan recycling. In terms of biological role, catalyzes the phosphorylation of N-acetyl-D-glucosamine (GlcNAc) derived from cell-wall degradation, yielding GlcNAc-6-P. The sequence is that of N-acetyl-D-glucosamine kinase from Yersinia enterocolitica serotype O:8 / biotype 1B (strain NCTC 13174 / 8081).